The primary structure comprises 161 residues: Putative 4-hydroxy-4-methyl-2-oxoglutarate aldolase (161 aa).

Substrate is bound by residues 75 to 78 (GDNL) and R97. Residue D98 coordinates a divalent metal cation.

The protein belongs to the class II aldolase/RraA-like family. Homotrimer. It depends on a divalent metal cation as a cofactor.

The enzyme catalyses 4-hydroxy-4-methyl-2-oxoglutarate = 2 pyruvate. It carries out the reaction oxaloacetate + H(+) = pyruvate + CO2. Its function is as follows. Catalyzes the aldol cleavage of 4-hydroxy-4-methyl-2-oxoglutarate (HMG) into 2 molecules of pyruvate. Also contains a secondary oxaloacetate (OAA) decarboxylase activity due to the common pyruvate enolate transition state formed following C-C bond cleavage in the retro-aldol and decarboxylation reactions. The chain is Putative 4-hydroxy-4-methyl-2-oxoglutarate aldolase from Alkalilimnicola ehrlichii (strain ATCC BAA-1101 / DSM 17681 / MLHE-1).